The following is a 111-amino-acid chain: uncharacterized protein (111 aa).

The protein belongs to the UPF0440 family.

This is an uncharacterized protein from Pyrococcus furiosus (strain ATCC 43587 / DSM 3638 / JCM 8422 / Vc1).